Reading from the N-terminus, the 301-residue chain is ATP synthase gamma chain (301 aa).

The protein belongs to the ATPase gamma chain family. In terms of assembly, F-type ATPases have 2 components, CF(1) - the catalytic core - and CF(0) - the membrane proton channel. CF(1) has five subunits: alpha(3), beta(3), gamma(1), delta(1), epsilon(1). CF(0) has three main subunits: a, b and c.

It localises to the cell inner membrane. Produces ATP from ADP in the presence of a proton gradient across the membrane. The gamma chain is believed to be important in regulating ATPase activity and the flow of protons through the CF(0) complex. This chain is ATP synthase gamma chain, found in Bordetella parapertussis (strain 12822 / ATCC BAA-587 / NCTC 13253).